Here is a 417-residue protein sequence, read N- to C-terminus: UDP-N-acetylglucosamine 1-carboxyvinyltransferase (417 aa).

Position 22-23 (22-23) interacts with phosphoenolpyruvate; that stretch reads KN. Arg92 contacts UDP-N-acetyl-alpha-D-glucosamine. Cys116 (proton donor) is an active-site residue. Position 116 is a 2-(S-cysteinyl)pyruvic acid O-phosphothioketal (Cys116). The UDP-N-acetyl-alpha-D-glucosamine site is built by Asp304 and Ile326.

The protein belongs to the EPSP synthase family. MurA subfamily.

It is found in the cytoplasm. The enzyme catalyses phosphoenolpyruvate + UDP-N-acetyl-alpha-D-glucosamine = UDP-N-acetyl-3-O-(1-carboxyvinyl)-alpha-D-glucosamine + phosphate. It functions in the pathway cell wall biogenesis; peptidoglycan biosynthesis. Functionally, cell wall formation. Adds enolpyruvyl to UDP-N-acetylglucosamine. The protein is UDP-N-acetylglucosamine 1-carboxyvinyltransferase of Geotalea daltonii (strain DSM 22248 / JCM 15807 / FRC-32) (Geobacter daltonii).